The primary structure comprises 74 residues: Mu-Sparatoxin-Hp2 (74 aa).

The signal sequence occupies residues 1–20 (MKIIVLMMMLFAAFSAVVLA). A propeptide spanning residues 21–35 (DKSIEDAALDTVMDR) is cleaved from the precursor. Disulfide bonds link Cys42–Cys57, Cys49–Cys62, and Cys56–Cys66. Leu73 carries the leucine amide modification.

Expressed by the venom gland.

Its subcellular location is the secreted. In terms of biological role, weakly nhibits voltage-gated sodium channels Nav1.7/SCN9A. High concentration of the toxin (3 uM) inhibits Nav1.7/SCN9A currents by 80%. The chain is Mu-Sparatoxin-Hp2 from Heteropoda pingtungensis (Pingtung huntsman spider).